The following is a 127-amino-acid chain: Small ribosomal subunit protein uS11 (127 aa).

Belongs to the universal ribosomal protein uS11 family. In terms of assembly, part of the 30S ribosomal subunit. Interacts with proteins S7 and S18. Binds to IF-3.

Located on the platform of the 30S subunit, it bridges several disparate RNA helices of the 16S rRNA. Forms part of the Shine-Dalgarno cleft in the 70S ribosome. In Chlorobaculum parvum (strain DSM 263 / NCIMB 8327) (Chlorobium vibrioforme subsp. thiosulfatophilum), this protein is Small ribosomal subunit protein uS11.